A 151-amino-acid chain; its full sequence is Macrodomain Ter protein (151 aa).

This sequence belongs to the MatP family. In terms of assembly, homodimer.

Its subcellular location is the cytoplasm. In terms of biological role, required for spatial organization of the terminus region of the chromosome (Ter macrodomain) during the cell cycle. Prevents early segregation of duplicated Ter macrodomains during cell division. Binds specifically to matS, which is a 13 bp signature motif repeated within the Ter macrodomain. The protein is Macrodomain Ter protein of Vibrio atlanticus (strain LGP32) (Vibrio splendidus (strain Mel32)).